The sequence spans 60 residues: Large ribosomal subunit protein bL32 (60 aa).

A disordered region spans residues Met1–Gln23.

Belongs to the bacterial ribosomal protein bL32 family.

The polypeptide is Large ribosomal subunit protein bL32 (Chlamydia abortus (strain DSM 27085 / S26/3) (Chlamydophila abortus)).